A 151-amino-acid polypeptide reads, in one-letter code: U1 small nuclear ribonucleoprotein C (151 aa).

The Matrin-type zinc-finger motif lies at 4 to 36 (FYCEYCSIYLTHSSPAGRKQHSQGRKHISAKVE).

Belongs to the U1 small nuclear ribonucleoprotein C family. U1 snRNP is composed of the 7 core Sm proteins B/B', D1, D2, D3, E, F and G that assemble in a heptameric protein ring on the Sm site of the small nuclear RNA to form the core snRNP, and at least 3 U1 snRNP-specific proteins U1-70K, U1-A and U1-C. U1-C interacts with U1 snRNA and the 5' splice-site region of the pre-mRNA.

It is found in the nucleus. Functionally, component of the spliceosomal U1 snRNP, which is essential for recognition of the pre-mRNA 5' splice-site and the subsequent assembly of the spliceosome. U1-C is directly involved in initial 5' splice-site recognition for both constitutive and regulated alternative splicing. The interaction with the 5' splice-site seems to precede base-pairing between the pre-mRNA and the U1 snRNA. Stimulates commitment or early (E) complex formation by stabilizing the base pairing of the 5' end of the U1 snRNA and the 5' splice-site region. In Theileria annulata, this protein is U1 small nuclear ribonucleoprotein C.